Reading from the N-terminus, the 65-residue chain is Small ribosomal subunit protein eS27 (65 aa).

Residues Cys21, Cys24, Cys40, and Cys43 each contribute to the Zn(2+) site. The C4-type zinc-finger motif lies at 21–43 (CRDCGNVQVVFARPSSTVTCNIC).

This sequence belongs to the eukaryotic ribosomal protein eS27 family. As to quaternary structure, part of the 30S ribosomal subunit. Zn(2+) is required as a cofactor.

This chain is Small ribosomal subunit protein eS27, found in Thermoplasma acidophilum (strain ATCC 25905 / DSM 1728 / JCM 9062 / NBRC 15155 / AMRC-C165).